The following is a 252-amino-acid chain: Insulin-induced gene 1 protein (252 aa).

The Cytoplasmic segment spans residues 1-59; sequence MPRLESGAWSCSCAARARHAARPGEAAPKADAMQSPSPSAGRAEREASGGSATTWRQHL. Residues 22–48 are disordered; it reads RPGEAAPKADAMQSPSPSAGRAEREAS. A helical membrane pass occupies residues 60–82; sequence VQRSVVLFVVGAFMALVLNLLQI. Residues 83-101 are Extracellular-facing; that stretch reads QRNVTLFPDEVIATLFSSA. Residues 102–119 form a helical membrane-spanning segment; sequence WWVPPCCGTAAAVVGLLY. Residues 120–134 are Cytoplasmic-facing; that stretch reads PCIDSHLGEPHKFKR. The helical transmembrane segment at 135–157 threads the bilayer; sequence EWASVMRCIAVFVGINHASAKLD. Residues 158–160 lie on the Extracellular side of the membrane; sequence FAN. Residues 161–179 form a helical membrane-spanning segment; sequence NVQLSLTLAALSLGLWWTF. Topologically, residues 180–184 are cytoplasmic; sequence DRSRS. A helical membrane pass occupies residues 185 to 206; that stretch reads GLGLGITIAFVATLITQFLVYN. Residues 207–220 are Extracellular-facing; the sequence is GVYQYTSPDFLYIR. Residues 221–238 form a helical membrane-spanning segment; the sequence is SWLPCIFFSGGVTVGNIG. Topologically, residues 239–252 are cytoplasmic; the sequence is RQLAMGIPEKPHND. A KxHxx motif is present at residues 246–252; it reads PEKPHND.

It belongs to the INSIG family. Interacts with SCAP; interaction is direct and only takes place in the presence of sterols; it prevents interaction between SCAP and the coat protein complex II (COPII). Associates with the SCAP-SREBP complex; association is mediated via its interaction with SCAP and only takes place in the presence of sterols.

The protein localises to the endoplasmic reticulum membrane. In terms of biological role, oxysterol-binding protein that mediates feedback control of cholesterol synthesis by controlling both endoplasmic reticulum to Golgi transport of SCAP and degradation of HMGCR. Acts as a negative regulator of cholesterol biosynthesis by mediating the retention of the SCAP-SREBP complex in the endoplasmic reticulum, thereby blocking the processing of sterol regulatory element-binding proteins (SREBPs). Binds oxysterol, including 25-hydroxycholesterol, regulating interaction with SCAP and retention of the SCAP-SREBP complex in the endoplasmic reticulum. In presence of oxysterol, interacts with SCAP, retaining the SCAP-SREBP complex in the endoplasmic reticulum, thereby preventing SCAP from escorting SREBPs to the Golgi. Sterol deprivation reduces oxysterol-binding, disrupting the interaction between INSIG1 and SCAP, thereby promoting Golgi transport of the SCAP-SREBP complex, followed by processing and nuclear translocation of SREBPs. Also regulates cholesterol synthesis by regulating degradation of HMGCR. In Gallus gallus (Chicken), this protein is Insulin-induced gene 1 protein.